A 248-amino-acid chain; its full sequence is Trypsin I-P1 (248 aa).

The N-terminal stretch at 1-15 (MKFLVLVAFVGVTVA) is a signal peptide. Positions 16-25 (FPISDEDDDK) are cleaved as a propeptide — activation peptide. Residues 26-246 (IVGGYSCARS…YVSWIKTTMS (221 aa)) form the Peptidase S1 domain. 6 disulfide bridges follow: C32/C162, C50/C66, C134/C235, C141/C208, C173/C187, and C198/C222. H65 (charge relay system) is an active-site residue. The Ca(2+) site is built by E77, N79, and E87. Catalysis depends on D109, which acts as the Charge relay system. The Charge relay system role is filled by S202.

This sequence belongs to the peptidase S1 family. The cofactor is Ca(2+). High levels are seen in the pancreas while lower levels are found in the liver, spleen and thymus.

It is found in the secreted. Its subcellular location is the extracellular space. It catalyses the reaction Preferential cleavage: Arg-|-Xaa, Lys-|-Xaa.. This Gallus gallus (Chicken) protein is Trypsin I-P1.